The sequence spans 372 residues: Cytochrome b (372 aa).

Helical transmembrane passes span 29–49 (FGSM…ILSW), 73–95 (WFIR…LHIL), 108–128 (VWYS…LGYV), and 174–194 (FFSF…IHLI). Residues H79 and H93 each coordinate heme b. Heme b-binding residues include H178 and H192. Position 197 (H197) interacts with a ubiquinone. Helical transmembrane passes span 220–240 (FSLK…FCIF), 284–301 (LGGV…VFLG), 311–336 (MVKT…IMGG), and 344–363 (DILG…IMLL).

The protein belongs to the cytochrome b family. The main subunits of complex b-c1 are: cytochrome b, cytochrome c1 and the Rieske protein. Heme b serves as cofactor.

It localises to the mitochondrion inner membrane. Component of the ubiquinol-cytochrome c reductase complex (complex III or cytochrome b-c1 complex) that is part of the mitochondrial respiratory chain. The b-c1 complex mediates electron transfer from ubiquinol to cytochrome c. Contributes to the generation of a proton gradient across the mitochondrial membrane that is then used for ATP synthesis. The sequence is that of Cytochrome b (mt:Cyt-b) from Leptorhynchoides thecatus (Thorny-headed worm).